The chain runs to 313 residues: Protein-methionine-sulfoxide reductase catalytic subunit MsrP (313 aa).

Residues 1-44 (MARWRPDTAEREATPEALYLRRREFLALGAAGAVGLLLPRGARA) constitute a signal peptide (tat-type signal). Mo-molybdopterin is bound by residues asparagine 76, 79-80 (YE), cysteine 134, threonine 169, asparagine 217, arginine 222, and 233-235 (GAK).

Belongs to the MsrP family. As to quaternary structure, heterodimer of a catalytic subunit (MsrP) and a heme-binding subunit (MsrQ). The cofactor is Mo-molybdopterin. Post-translationally, predicted to be exported by the Tat system. The position of the signal peptide cleavage has not been experimentally proven.

Its subcellular location is the periplasm. It catalyses the reaction L-methionyl-[protein] + a quinone + H2O = L-methionyl-(S)-S-oxide-[protein] + a quinol. The catalysed reaction is L-methionyl-[protein] + a quinone + H2O = L-methionyl-(R)-S-oxide-[protein] + a quinol. Its function is as follows. Part of the MsrPQ system that repairs oxidized periplasmic proteins containing methionine sulfoxide residues (Met-O), using respiratory chain electrons. Thus protects these proteins from oxidative-stress damage caused by reactive species of oxygen and chlorine generated by the host defense mechanisms. MsrPQ is essential for the maintenance of envelope integrity under bleach stress, rescuing a wide series of structurally unrelated periplasmic proteins from methionine oxidation. The catalytic subunit MsrP is non-stereospecific, being able to reduce both (R-) and (S-) diastereoisomers of methionine sulfoxide. In Anaeromyxobacter dehalogenans (strain 2CP-C), this protein is Protein-methionine-sulfoxide reductase catalytic subunit MsrP.